A 349-amino-acid polypeptide reads, in one-letter code: MSDFQREQRKNEHVEIAMAQSDAMHSDFDKMRFVHHSIPSINVNDIDLTSQTPDLTMAYPIYINAMTGGSEWTKNINEKLAVVARETRLAMAVGSTHAALRNPRMAETFTIARKMNPEGMIFSNVGADVPVEKALEAVELLEAQALQIHVNSPQELVMPEGNREFVTWLDNIASIVSRVSVPVIIKEVGFGMSKELMHDLQQIGVKYVDVSGKGGTNFVDIENERRANKDMDYLSSWGQSTVESLLETTAYQSEISVFASGGLRTPLDAIKSLALGAKATGMSRPFLNQVENNGIAHTVAYVESFIEHMKSIMTMLDAKNIDDLTQKQIVFSPEIMSWIEQRSLNIHRG.

9 to 10 (RK) is a substrate binding site. FMN-binding positions include 65 to 67 (AMT), S95, and N124. Residue 95 to 97 (STH) coordinates substrate. Q154 is a binding site for substrate. E155 is a Mg(2+) binding site. Residues K186, S211, T216, 262 to 264 (GLR), and 283 to 284 (SR) each bind FMN.

It belongs to the IPP isomerase type 2 family. Homooctamer. Dimer of tetramers. It depends on FMN as a cofactor. Requires NADPH as cofactor. The cofactor is Mg(2+).

It is found in the cytoplasm. It carries out the reaction isopentenyl diphosphate = dimethylallyl diphosphate. Its function is as follows. Involved in the biosynthesis of isoprenoids. Catalyzes the 1,3-allylic rearrangement of the homoallylic substrate isopentenyl (IPP) to its allylic isomer, dimethylallyl diphosphate (DMAPP). This Staphylococcus aureus (strain N315) protein is Isopentenyl-diphosphate delta-isomerase.